The following is a 1022-amino-acid chain: ATPase MORC2B (1022 aa).

The residue at position 2 (alanine 2) is an N-acetylalanine. Residues asparagine 39, 87–89 (SAK), and 99–105 (RYGNGLK) contribute to the ATP site. Asparagine 39 serves as a coordination point for Mg(2+). Residues 285 to 362 (KTRAEQEVKK…RDAKQQALKE (78 aa)) adopt a coiled-coil conformation. Lysine 427 is a binding site for ATP. The CW-type zinc finger occupies 490-544 (AMQVPTTIQCDLCLKWRTLPFQLSAVEEGYPINWVCSMNPDPEQDQCEAFELKQK). Zn(2+)-binding residues include cysteine 499, cysteine 502, cysteine 525, and cysteine 536. Positions 555 to 583 (KTQEERQKQLTEKIQQEQRKLKALKKIKP) form a coiled coil. At serine 615 the chain carries Phosphoserine. A Glycyl lysine isopeptide (Lys-Gly) (interchain with G-Cter in SUMO2) cross-link involves residue lysine 649. Phosphoserine occurs at positions 690, 724, 733, and 737. Lysine 758 is covalently cross-linked (Glycyl lysine isopeptide (Lys-Gly) (interchain with G-Cter in SUMO2)). Serine 768 and serine 770 each carry phosphoserine. Threonine 827 is subject to Phosphothreonine. Residues serine 846 and serine 851 each carry the phosphoserine modification. Lysine 922 participates in a covalent cross-link: Glycyl lysine isopeptide (Lys-Gly) (interchain with G-Cter in SUMO2). The stretch at 962 to 1001 (QAKVSEESLRISQKKLQETEEKLQKLRTNIQTLLQMAQQG) forms a coiled coil.

In terms of assembly, interacts with Morc2a. In terms of tissue distribution, protein is abundant in testes but not detected in other adult tissues examined (at protein level). Detected in germ cells with a distinct developmental-specific expression pattern but not in somatic cells such as Sertoli cells.

The protein localises to the nucleus. It catalyses the reaction ATP + H2O = ADP + phosphate + H(+). Required for chromosomal synapsis and meiotic recombination in males and females. The protein is ATPase MORC2B of Mus musculus (Mouse).